Reading from the N-terminus, the 393-residue chain is GDNF family receptor alpha-like (393 aa).

An N-terminal signal peptide occupies residues 1–19 (MLVFIFLAVTLSSENESSS). The Extracellular segment spans residues 20-349 (QTNDCAHLIQ…LTGFNSFFNG (330 aa)). 4 N-linked (GlcNAc...) asparagine glycosylation sites follow: N59, N65, N101, and N115. 11 disulfides stabilise this stretch: C131–C189, C138–C144, C155–C167, C162–C210, C191–C198, C220–C291, C227–C233, C244–C275, C252–C258, C269–C316, and C293–C304. The tract at residues 149-228 (ALYLKACSAN…TCLSVIHTCR (80 aa)) is required for interaction with GDF15. Residues 350-370 (ELLYVVVCMAVTCGILFLVML) traverse the membrane as a helical segment. At 371–393 (KLRIQSEKRDPSSIEIAGGVIIQ) the chain is on the cytoplasmic side.

This sequence belongs to the GDNFR family. As to quaternary structure, interacts (via the extracellular domain) with GDF15 and RET; receptor of GDF15, mediates cellular signaling through interaction with RET after GDF15-binding. Interaction with RET requires previous GDF15-binding. In terms of processing, cleaved and inactivated by MMP14, inhibiting the GDF15-GFRAL aversive response. As to expression, expressed in the brainstem, restricted to cells in the area postrema and the immediately adjacent region of the nucleus tractus solitarius.

The protein localises to the cell membrane. Specifically inhibited by 3P10 monoclonal antibody. Strongly activated by LY3463251, a long-acting and stable agonist composed of GDF15 conjugated monomeric human IgG4 Fc. In terms of biological role, brainstem-restricted receptor for GDF15 hormone, which triggers an aversive response, characterized by nausea, vomiting, and/or loss of appetite in response to various stresses. The aversive response is both required to reduce continuing exposure to those stresses at the time of exposure and to promote avoidance behavior in the future. The GDF15-GFRAL aversive response is triggered by stresses, such as anticancer drugs (camptothecin or cisplatin), cancers or drugs such as metformin. Upon interaction with its ligand, GDF15, mediates the GDF15-induced autophosphorylation and activation of the RET tyrosine kinase receptor, leading to activation of MAPK- and AKT- signaling pathways. Ligand-binding activates GFRAL-expressing neurons localized in the area postrema and nucleus tractus solitarius of the brainstem. The GDF15-GFRAL signal induces expression of genes involved in metabolism, such as lipid metabolism in adipose tissues. The polypeptide is GDNF family receptor alpha-like (Gfral) (Mus musculus (Mouse)).